The primary structure comprises 632 residues: DNA ligase (632 aa).

NAD(+) contacts are provided by residues 45–49 (NEDYD) and 89–90 (SI). The active-site N6-AMP-lysine intermediate is the Lys127. 3 residues coordinate NAD(+): Arg143, Glu174, and Lys286. Positions 374, 377, 390, and 396 each coordinate Zn(2+). Residues 561–632 (DKRIVFTGKM…EADYLSKITM (72 aa)) form the BRCT domain.

It belongs to the NAD-dependent DNA ligase family. LigA subfamily. Mg(2+) is required as a cofactor. The cofactor is Mn(2+).

It catalyses the reaction NAD(+) + (deoxyribonucleotide)n-3'-hydroxyl + 5'-phospho-(deoxyribonucleotide)m = (deoxyribonucleotide)n+m + AMP + beta-nicotinamide D-nucleotide.. In terms of biological role, DNA ligase that catalyzes the formation of phosphodiester linkages between 5'-phosphoryl and 3'-hydroxyl groups in double-stranded DNA using NAD as a coenzyme and as the energy source for the reaction. It is essential for DNA replication and repair of damaged DNA. The protein is DNA ligase of Vesicomyosocius okutanii subsp. Calyptogena okutanii (strain HA).